Consider the following 376-residue polypeptide: Chaperone protein DnaJ (376 aa).

The J domain occupies 5 to 70 (DYYEVLGVAK…QKRAAYDQYG (66 aa)). The CR-type zinc finger occupies 136-214 (GYDTQIRVPS…CHGSGKVKET (79 aa)). Cys149, Cys152, Cys166, Cys169, Cys188, Cys191, Cys202, and Cys205 together coordinate Zn(2+). CXXCXGXG motif repeat units follow at residues 149 to 156 (CGVCHGSG), 166 to 173 (CPTCHGQG), 188 to 195 (CPKCHGTG), and 202 to 209 (CVHCHGSG).

The protein belongs to the DnaJ family. In terms of assembly, homodimer. The cofactor is Zn(2+).

The protein resides in the cytoplasm. Functionally, participates actively in the response to hyperosmotic and heat shock by preventing the aggregation of stress-denatured proteins and by disaggregating proteins, also in an autonomous, DnaK-independent fashion. Unfolded proteins bind initially to DnaJ; upon interaction with the DnaJ-bound protein, DnaK hydrolyzes its bound ATP, resulting in the formation of a stable complex. GrpE releases ADP from DnaK; ATP binding to DnaK triggers the release of the substrate protein, thus completing the reaction cycle. Several rounds of ATP-dependent interactions between DnaJ, DnaK and GrpE are required for fully efficient folding. Also involved, together with DnaK and GrpE, in the DNA replication of plasmids through activation of initiation proteins. This Burkholderia pseudomallei (strain 1710b) protein is Chaperone protein DnaJ.